The primary structure comprises 258 residues: MTWNPDQYHQFKDARSAPARDLQALIPERPYAQVVDLGCGTGEQTAQLAQRFPQATVLGLDSSAAMLAKAGAQQLPNLRFEQGDIQELSGSFDLLYSNAALQWLPDHPRLLARLWEHLRPGGVLAVQVPANHDHASHRLLTATANEFETELGGFTRFGTAHGASPVLTPAAYAELLDGLGAVDITALSKVYPVVLPGAEGLIEWTKGTALVPYLSRLDGADAARFLDVYRGKLQAEFPGERVYYAFTRVLFVATRPEL.

Belongs to the methyltransferase superfamily. Tam family.

The protein localises to the cytoplasm. The catalysed reaction is trans-aconitate + S-adenosyl-L-methionine = (E)-3-(methoxycarbonyl)pent-2-enedioate + S-adenosyl-L-homocysteine. In terms of biological role, catalyzes the S-adenosylmethionine monomethyl esterification of trans-aconitate. In Deinococcus radiodurans (strain ATCC 13939 / DSM 20539 / JCM 16871 / CCUG 27074 / LMG 4051 / NBRC 15346 / NCIMB 9279 / VKM B-1422 / R1), this protein is Trans-aconitate 2-methyltransferase.